The primary structure comprises 439 residues: Homogentisate 1,2-dioxygenase (439 aa).

Residue His293 is the Proton acceptor of the active site. 2 residues coordinate Fe cation: His336 and Glu342. Positions 351 and 372 each coordinate homogentisate. His372 lines the Fe cation pocket.

This sequence belongs to the homogentisate dioxygenase family. In terms of assembly, hexamer; dimer of trimers. Fe cation serves as cofactor.

It carries out the reaction homogentisate + O2 = 4-maleylacetoacetate + H(+). It participates in amino-acid degradation; L-phenylalanine degradation; acetoacetate and fumarate from L-phenylalanine: step 4/6. Functionally, involved in the catabolism of homogentisate (2,5-dihydroxyphenylacetate or 2,5-OH-PhAc), a central intermediate in the degradation of phenylalanine and tyrosine. Catalyzes the oxidative ring cleavage of the aromatic ring of homogentisate to yield maleylacetoacetate. This Cupriavidus necator (strain ATCC 17699 / DSM 428 / KCTC 22496 / NCIMB 10442 / H16 / Stanier 337) (Ralstonia eutropha) protein is Homogentisate 1,2-dioxygenase.